Consider the following 855-residue polypeptide: Receptor-like protein kinase THESEUS 1 (855 aa).

A signal peptide spans Met1–Ser22. Residues Ser23 to Lys415 are Extracellular-facing. N-linked (GlcNAc...) asparagine glycans are attached at residues Asn41, Asn64, Asn75, Asn114, Asn118, Asn136, Asn143, Asn154, Asn168, Asn225, Asn242, Asn288, Asn353, and Asn376. The chain crosses the membrane as a helical span at residues Ala416–Cys436. Residues Tyr437–Arg855 are Cytoplasmic-facing. In terms of domain architecture, Protein kinase spans Phe510–Ala783. ATP contacts are provided by residues Leu516–Val524 and Lys538. Catalysis depends on Asp634, which acts as the Proton acceptor. Positions Ile822–Arg855 are disordered.

This sequence belongs to the protein kinase superfamily. Ser/Thr protein kinase family. Post-translationally, autophosphorylated. As to expression, expressed in most vegetative tissues, including leaves, stems and roots, primarily in expanding cells and vascular tissue.

The protein localises to the cell membrane. Functionally, receptor-like protein kinase required for cell elongation during vegetative growth, mostly in a brassinosteroid-(BR-) independent manner. Mediates the response of growing plant cells to the perturbation of cellulose synthesis and may act as a cell-wall-integrity sensor. Controls ectopic-lignin accumulation in cellulose-deficient mutant backgrounds. The sequence is that of Receptor-like protein kinase THESEUS 1 (THE1) from Arabidopsis thaliana (Mouse-ear cress).